Here is a 146-residue protein sequence, read N- to C-terminus: 3-hydroxyacyl-[acyl-carrier-protein] dehydratase FabZ (146 aa).

Histidine 49 is an active-site residue.

This sequence belongs to the thioester dehydratase family. FabZ subfamily.

Its subcellular location is the cytoplasm. It carries out the reaction a (3R)-hydroxyacyl-[ACP] = a (2E)-enoyl-[ACP] + H2O. Involved in unsaturated fatty acids biosynthesis. Catalyzes the dehydration of short chain beta-hydroxyacyl-ACPs and long chain saturated and unsaturated beta-hydroxyacyl-ACPs. This is 3-hydroxyacyl-[acyl-carrier-protein] dehydratase FabZ from Pseudomonas syringae pv. tomato (strain ATCC BAA-871 / DC3000).